The chain runs to 145 residues: D-aminoacyl-tRNA deacylase (145 aa).

Residues 137–138 (GP) carry the Gly-cisPro motif, important for rejection of L-amino acids motif.

The protein belongs to the DTD family. Homodimer.

Its subcellular location is the cytoplasm. The catalysed reaction is glycyl-tRNA(Ala) + H2O = tRNA(Ala) + glycine + H(+). It carries out the reaction a D-aminoacyl-tRNA + H2O = a tRNA + a D-alpha-amino acid + H(+). An aminoacyl-tRNA editing enzyme that deacylates mischarged D-aminoacyl-tRNAs. Also deacylates mischarged glycyl-tRNA(Ala), protecting cells against glycine mischarging by AlaRS. Acts via tRNA-based rather than protein-based catalysis; rejects L-amino acids rather than detecting D-amino acids in the active site. By recycling D-aminoacyl-tRNA to D-amino acids and free tRNA molecules, this enzyme counteracts the toxicity associated with the formation of D-aminoacyl-tRNA entities in vivo and helps enforce protein L-homochirality. The polypeptide is D-aminoacyl-tRNA deacylase (Colwellia psychrerythraea (strain 34H / ATCC BAA-681) (Vibrio psychroerythus)).